Reading from the N-terminus, the 270-residue chain is Aliphatic sulfonates import ATP-binding protein SsuB (270 aa).

The region spanning 17–238 (LASKGLRKTF…ARGSHRLAAL (222 aa)) is the ABC transporter domain. 49–56 (GRSGCGKS) is a binding site for ATP. Residues 248-270 (STPGTAPEPDPVAPLPTQLRWAH) form a disordered region.

The protein belongs to the ABC transporter superfamily. Aliphatic sulfonates importer (TC 3.A.1.17.2) family. In terms of assembly, the complex is composed of two ATP-binding proteins (SsuB), two transmembrane proteins (SsuC) and a solute-binding protein (SsuA).

It localises to the cell inner membrane. It carries out the reaction ATP + H2O + aliphatic sulfonate-[sulfonate-binding protein]Side 1 = ADP + phosphate + aliphatic sulfonateSide 2 + [sulfonate-binding protein]Side 1.. Part of the ABC transporter complex SsuABC involved in aliphatic sulfonates import. Responsible for energy coupling to the transport system. The chain is Aliphatic sulfonates import ATP-binding protein SsuB from Pseudomonas putida (strain ATCC 47054 / DSM 6125 / CFBP 8728 / NCIMB 11950 / KT2440).